We begin with the raw amino-acid sequence, 108 residues long: DNA-binding protein HBbu (108 aa).

The protein belongs to the bacterial histone-like protein family.

Histone-like DNA-binding protein which is capable of wrapping DNA to stabilize it, and thus to prevent its denaturation under extreme environmental conditions. The polypeptide is DNA-binding protein HBbu (hbb) (Borrelia parkeri).